The following is a 514-amino-acid chain: Zinc finger CCCH-type with G patch domain-containing protein (514 aa).

The disordered stretch occupies residues 96-129 (GEEPQPPGAGDGASTGSKDSEEEEEEEDGSSGMK). The span at 115–124 (SEEEEEEEDG) shows a compositional bias: acidic residues. The segment at 171-197 (KAMKPCPFFLDGKCRFDDSCRFSHGQV) adopts a C3H1-type zinc-finger fold. Disordered stretches follow at residues 262–288 (IPPL…AAED), 363–422 (QQRK…AAER), and 494–514 (EEHS…MTEF). Residues 272–287 (SSDDDDDDEEEDDAAE) are compositionally biased toward acidic residues. The G-patch domain maps to 315 to 373 (TRGIGSKLLARMGYEIGKGLGRNAEGRVEPIQAVLLPKGKSLDQCIEMQQRKKAGGKRE). The span at 365-383 (RKKAGGKREHKAGKRRPRA) shows a compositional bias: basic residues.

It is found in the nucleus. Its function is as follows. Transcription repressor that specifically binds the 5'-GGAG[GA]A[GA]A-3' consensus sequence. Represses transcription by recruiting the chromatin multiprotein complex NuRD to target promoters. Negatively regulates expression of EGFR, a gene involved in cell proliferation, survival and migration. In Xenopus tropicalis (Western clawed frog), this protein is Zinc finger CCCH-type with G patch domain-containing protein (zgpat).